Consider the following 597-residue polypeptide: MSDYYGGAHTTVRLIDLATRMPRVLADTPVIVRGAMTGLLARPNSKASIGTVFQDRAARYGDRVFLKFGDQQLTYRDANATANRYAAVLAARGVGPGDVVGIMLRNSPSTVLAMLATVKCGAIAGMLNYHQRGEVLAHSLGLLDAKVLIAESDLVSAVAECGASRGRVAGDVLTVEDVERFATTAPATNPASASAVQAKDTAFYIFTSGTTGFPKASVMTHHRWLRALAVFGGMGLRLKGSDTLYSCLPLYHNNALTVAVSSVINSGATLALGKSFSASRFWDEVIANRATAFVYIGEICRYLLNQPAKPTDRAHQVRVICGNGLRPEIWDEFTTRFGVARVCEFYAASEGNSAFINIFNVPRTAGVSPMPLAFVEYDLDTGDPLRDASGRVRRVPDGEPGLLLSRVNRLQPFDGYTDPVASEKKLVRNAFRDGDCWFNTGDVMSPQGMGHAAFVDRLGDTFRWKGENVATTQVEAALASDQTVEECTVYGVQIPRTGGRAGMAAITLRAGAEFDGQALARTVYGHLPGYALPLFVRVVGSLAHTTTFKSRKVELRNQAYGADIEDPLYVLAGPDEGYVPYYAEYPEEVSLGRRPQG.

Belongs to the ATP-dependent AMP-binding enzyme family.

It carries out the reaction a medium-chain fatty acid + ATP + CoA = a medium-chain fatty acyl-CoA + AMP + diphosphate. It catalyses the reaction a long-chain fatty acid + ATP + CoA = a long-chain fatty acyl-CoA + AMP + diphosphate. The enzyme catalyses hexanoate + ATP + CoA = hexanoyl-CoA + AMP + diphosphate. The catalysed reaction is octanoate + ATP + CoA = octanoyl-CoA + AMP + diphosphate. It carries out the reaction decanoate + ATP + CoA = decanoyl-CoA + AMP + diphosphate. It catalyses the reaction dodecanoate + ATP + CoA = dodecanoyl-CoA + AMP + diphosphate. The enzyme catalyses tetradecanoate + ATP + CoA = tetradecanoyl-CoA + AMP + diphosphate. The catalysed reaction is hexadecanoate + ATP + CoA = hexadecanoyl-CoA + AMP + diphosphate. It carries out the reaction octadecanoate + ATP + CoA = octadecanoyl-CoA + AMP + diphosphate. It catalyses the reaction 9-decenoate + ATP + CoA = 9-decenoyl-CoA + AMP + diphosphate. The enzyme catalyses (9Z)-octadecenoate + ATP + CoA = (9Z)-octadecenoyl-CoA + AMP + diphosphate. The catalysed reaction is 2-hydroxyhexadecanoate + ATP + CoA = 2-hydroxyhexadecanoyl-CoA + AMP + diphosphate. It carries out the reaction 3-hydroxytetradecanoate + ATP + CoA = 3-hydroxytetradecanoyl-CoA + AMP + diphosphate. It catalyses the reaction 12-hydroxyoctadecanoate + ATP + CoA = 12-hydroxyoctadecanoyl-CoA + AMP + diphosphate. The enzyme catalyses 15-hydroxypentadecanoate + ATP + CoA = 15-hydroxypentadecanoyl-CoA + AMP + diphosphate. The catalysed reaction is 16-hydroxyhexadecanoate + ATP + CoA = 16-hydroxyhexadecanoyl-CoA + AMP + diphosphate. It carries out the reaction 2-methylhexadecanoate + ATP + CoA = 2-methylhexadecanoyl-CoA + AMP + diphosphate. It catalyses the reaction 3-methylundecanoate + ATP + CoA = 3-methylundecanoyl-CoA + AMP + diphosphate. The enzyme catalyses 12-methyltridecanoate + ATP + CoA = 12-methyltridecanoyl-CoA + AMP + diphosphate. The catalysed reaction is 12-methyloctadecanoate + ATP + CoA = 12-methyloctadecanoyl-CoA + AMP + diphosphate. Its function is as follows. Catalyzes the activation of medium/long-chain fatty acids as acyl-coenzyme A (acyl-CoA). May play a role in the uptake of fatty acids by trapping them metabolically as CoA esters. May also play an important role in the channeling of fatty acids into triacylglycerol (TAG) for use by Mycobacterium during its dormancy. This Mycobacterium tuberculosis (strain ATCC 25618 / H37Rv) protein is Medium/long-chain-fatty-acid--CoA ligase FadD6.